Reading from the N-terminus, the 346-residue chain is tRNA N6-adenosine threonylcarbamoyltransferase (346 aa).

Fe cation contacts are provided by His111 and His115. Substrate is bound by residues 134–138, Asp167, Gly180, and Asn279; that span reads LVSGG. A Fe cation-binding site is contributed by Asp307.

Belongs to the KAE1 / TsaD family. Fe(2+) is required as a cofactor.

The protein resides in the cytoplasm. The catalysed reaction is L-threonylcarbamoyladenylate + adenosine(37) in tRNA = N(6)-L-threonylcarbamoyladenosine(37) in tRNA + AMP + H(+). In terms of biological role, required for the formation of a threonylcarbamoyl group on adenosine at position 37 (t(6)A37) in tRNAs that read codons beginning with adenine. Is involved in the transfer of the threonylcarbamoyl moiety of threonylcarbamoyl-AMP (TC-AMP) to the N6 group of A37, together with TsaE and TsaB. TsaD likely plays a direct catalytic role in this reaction. In Burkholderia cenocepacia (strain ATCC BAA-245 / DSM 16553 / LMG 16656 / NCTC 13227 / J2315 / CF5610) (Burkholderia cepacia (strain J2315)), this protein is tRNA N6-adenosine threonylcarbamoyltransferase.